Consider the following 128-residue polypeptide: Large ribosomal subunit protein uL22 (128 aa).

The protein belongs to the universal ribosomal protein uL22 family. In terms of assembly, part of the 50S ribosomal subunit.

In terms of biological role, this protein binds specifically to 23S rRNA; its binding is stimulated by other ribosomal proteins, e.g. L4, L17, and L20. It is important during the early stages of 50S assembly. It makes multiple contacts with different domains of the 23S rRNA in the assembled 50S subunit and ribosome. Its function is as follows. The globular domain of the protein is located near the polypeptide exit tunnel on the outside of the subunit, while an extended beta-hairpin is found that lines the wall of the exit tunnel in the center of the 70S ribosome. The protein is Large ribosomal subunit protein uL22 of Nitrobacter hamburgensis (strain DSM 10229 / NCIMB 13809 / X14).